We begin with the raw amino-acid sequence, 152 residues long: UPF0756 membrane protein Moth_1009 (152 aa).

A run of 4 helical transmembrane segments spans residues 5–25 (LIILAVLVVAVLGRANTVALA), 41–61 (IFPFIEKGGTFWGLVLLIAAI), 75–95 (LGHVFLSWVGLSAFILSLITT), and 117–137 (LILGAVIAAAFLGGVPVGPFI).

The protein belongs to the UPF0756 family.

Its subcellular location is the cell membrane. This Moorella thermoacetica (strain ATCC 39073 / JCM 9320) protein is UPF0756 membrane protein Moth_1009.